We begin with the raw amino-acid sequence, 233 residues long: ATP synthase subunit a (233 aa).

A run of 7 helical transmembrane segments spans residues 29–49 (FKHVFYTWCVMAMLFAVSFIV), 60–80 (LQNIFEVIIGGLEEFVVSITG), 89–109 (VLIVFFLFILCMNLTGLVPGF), 115–135 (NINTTASLALFCFIYYNYIGI), 143–163 (IKHFMGPMWWLSPLMLPLELI), 185–205 (FVLILFFMLAPIIGTIPIYFL), and 206–226 (FTLAKVLQAFIFFMLATIYLK).

This sequence belongs to the ATPase A chain family. As to quaternary structure, F-type ATPases have 2 components, CF(1) - the catalytic core - and CF(0) - the membrane proton channel. CF(1) has five subunits: alpha(3), beta(3), gamma(1), delta(1), epsilon(1). CF(0) has three main subunits: a(1), b(2) and c(9-12). The alpha and beta chains form an alternating ring which encloses part of the gamma chain. CF(1) is attached to CF(0) by a central stalk formed by the gamma and epsilon chains, while a peripheral stalk is formed by the delta and b chains.

It localises to the cell inner membrane. In terms of biological role, key component of the proton channel; it plays a direct role in the translocation of protons across the membrane. In Oleidesulfovibrio alaskensis (strain ATCC BAA-1058 / DSM 17464 / G20) (Desulfovibrio alaskensis), this protein is ATP synthase subunit a.